The sequence spans 2211 residues: Nonribosomal peptide synthetase 13 (2211 aa).

The adenylation 1 stretch occupies residues 76 to 475 (TYAELDSLSD…IEHHLQLTLP (400 aa)). A Carrier 1 domain is found at 594 to 671 (PPSTPKEATI…EQSKRAGLIQ (78 aa)). Serine 631 carries the post-translational modification O-(pantetheine 4'-phosphoryl)serine. The tract at residues 710-975 (EDIYPCTALQ…IATVPTRIRV (266 aa)) is condensation 1. Positions 1169 to 1563 (TYRELWAHSS…LGAVEASVMR (395 aa)) are adenylation 2. In terms of domain architecture, Carrier 2 spans 1677-1756 (PMSDDNERRL…RSRHLITEQA (80 aa)). Residue serine 1714 is modified to O-(pantetheine 4'-phosphoryl)serine. The interval 1814-2069 (HFQFDLSGAV…CTNYIPYRLS (256 aa)) is condensation 2.

The protein belongs to the NRP synthetase family.

The catalysed reaction is L-proline + L-tryptophan + 2 ATP = brevianamide F + 2 AMP + 2 diphosphate + 2 H(+). It participates in mycotoxin biosynthesis. Nonribosomal peptide synthetase; part of the gene cluster that mediates the biosynthesis of fumitremorgins, indole alkaloids that carry not only intriguing chemical structures, but also interesting biological and pharmacological activities. The biosynthesis of fumitremorgin-type alkaloids begins by condensation of the two amino acids L-tryptophan and L-proline to brevianamide F, catalyzed by the non-ribosomal peptide synthetase ftmA. Brevianamide F is then prenylated by the prenyltransferase ftmPT1/ftmB in the presence of dimethylallyl diphosphate, resulting in the formation of tryprostatin B. The three cytochrome P450 monooxygenases, ftmP450-1/ftmC, ftmP450-2/ftmE and ftmP450-3/FtmG, are responsible for the conversion of tryprostatin B to 6-hydroxytryprostatin B, tryprostatin A to fumitremorgin C and fumitremorgin C to 12,13-dihydroxyfumitremorgin C, respectively. The putative methyltransferase ftmMT/ftmD is expected for the conversion of 6-hydroxytryprostatin B to tryprostatin A. FtmPT2/FtmH catalyzes the prenylation of 12,13-dihydroxyfumitre-morgin C in the presence of dimethylallyl diphosphate, resulting in the formation of fumitremorgin B. Fumitremorgin B is further converted to verruculogen by ftmOx1/ftmF via the insertion of an endoperoxide bond between the two prenyl moieties. In some fungal species, verruculogen is further converted to fumitremorgin A, but the enzymes involved in this step have not been identified yet. The sequence is that of Nonribosomal peptide synthetase 13 from Aspergillus fumigatus (strain ATCC MYA-4609 / CBS 101355 / FGSC A1100 / Af293) (Neosartorya fumigata).